Here is a 423-residue protein sequence, read N- to C-terminus: UDP-N-acetylmuramoylalanine--D-glutamate ligase (423 aa).

112-118 (GSVGKST) contacts ATP.

It belongs to the MurCDEF family.

It localises to the cytoplasm. It catalyses the reaction UDP-N-acetyl-alpha-D-muramoyl-L-alanine + D-glutamate + ATP = UDP-N-acetyl-alpha-D-muramoyl-L-alanyl-D-glutamate + ADP + phosphate + H(+). The protein operates within cell wall biogenesis; peptidoglycan biosynthesis. In terms of biological role, cell wall formation. Catalyzes the addition of glutamate to the nucleotide precursor UDP-N-acetylmuramoyl-L-alanine (UMA). The chain is UDP-N-acetylmuramoylalanine--D-glutamate ligase from Thermosipho africanus (strain TCF52B).